A 276-amino-acid polypeptide reads, in one-letter code: Small ribosomal subunit protein uS2 (276 aa).

The disordered stretch occupies residues lysine 226 to glutamate 276. Low complexity predominate over residues alanine 251–glutamate 276.

Belongs to the universal ribosomal protein uS2 family.

The sequence is that of Small ribosomal subunit protein uS2 from Corynebacterium efficiens (strain DSM 44549 / YS-314 / AJ 12310 / JCM 11189 / NBRC 100395).